The chain runs to 210 residues: Dephospho-CoA kinase (210 aa).

One can recognise a DPCK domain in the interval 4–202 (WVGLTGGIGS…AFYSGIFASK (199 aa)). 12 to 17 (GSGKSA) contacts ATP.

Belongs to the CoaE family.

Its subcellular location is the cytoplasm. The catalysed reaction is 3'-dephospho-CoA + ATP = ADP + CoA + H(+). It participates in cofactor biosynthesis; coenzyme A biosynthesis; CoA from (R)-pantothenate: step 5/5. Its function is as follows. Catalyzes the phosphorylation of the 3'-hydroxyl group of dephosphocoenzyme A to form coenzyme A. The polypeptide is Dephospho-CoA kinase (Neisseria gonorrhoeae (strain ATCC 700825 / FA 1090)).